The following is a 381-amino-acid chain: Alkanesulfonate monooxygenase (381 aa).

The protein belongs to the SsuD family. Homotetramer.

It carries out the reaction an alkanesulfonate + FMNH2 + O2 = an aldehyde + FMN + sulfite + H2O + 2 H(+). Functionally, catalyzes the desulfonation of aliphatic sulfonates. The polypeptide is Alkanesulfonate monooxygenase (Shigella flexneri serotype 5b (strain 8401)).